The primary structure comprises 161 residues: Nucleotide-binding protein BamMC406_2474 (161 aa).

This sequence belongs to the YajQ family.

In terms of biological role, nucleotide-binding protein. The sequence is that of Nucleotide-binding protein BamMC406_2474 from Burkholderia ambifaria (strain MC40-6).